A 320-amino-acid chain; its full sequence is Malate dehydrogenase (320 aa).

Residues 10 to 15 and aspartate 34 contribute to the NAD(+) site; that span reads GSGMIG. Positions 83 and 89 each coordinate substrate. NAD(+)-binding positions include asparagine 96 and 119–121; that span reads ITN. The substrate site is built by asparagine 121 and arginine 152. Histidine 176 serves as the catalytic Proton acceptor.

The protein belongs to the LDH/MDH superfamily. MDH type 3 family.

It catalyses the reaction (S)-malate + NAD(+) = oxaloacetate + NADH + H(+). Functionally, catalyzes the reversible oxidation of malate to oxaloacetate. The chain is Malate dehydrogenase from Brucella melitensis biotype 1 (strain ATCC 23456 / CCUG 17765 / NCTC 10094 / 16M).